Here is a 331-residue protein sequence, read N- to C-terminus: Protein RecA (331 aa).

ATP is bound at residue 66–73 (GPESSGKT).

Belongs to the RecA family.

The protein localises to the cytoplasm. Can catalyze the hydrolysis of ATP in the presence of single-stranded DNA, the ATP-dependent uptake of single-stranded DNA by duplex DNA, and the ATP-dependent hybridization of homologous single-stranded DNAs. It interacts with LexA causing its activation and leading to its autocatalytic cleavage. This chain is Protein RecA, found in Acholeplasma laidlawii.